The following is a 341-amino-acid chain: Glycerol-3-phosphate dehydrogenase [NAD(P)+] (341 aa).

NADPH-binding residues include S14, F15, R35, and K108. 2 residues coordinate sn-glycerol 3-phosphate: K108 and G136. NADPH is bound at residue A140. 5 residues coordinate sn-glycerol 3-phosphate: K191, D244, S254, R255, and N256. K191 functions as the Proton acceptor in the catalytic mechanism. NADPH is bound at residue R255. V279 and E281 together coordinate NADPH.

Belongs to the NAD-dependent glycerol-3-phosphate dehydrogenase family.

The protein resides in the cytoplasm. It catalyses the reaction sn-glycerol 3-phosphate + NAD(+) = dihydroxyacetone phosphate + NADH + H(+). It carries out the reaction sn-glycerol 3-phosphate + NADP(+) = dihydroxyacetone phosphate + NADPH + H(+). It participates in membrane lipid metabolism; glycerophospholipid metabolism. Catalyzes the reduction of the glycolytic intermediate dihydroxyacetone phosphate (DHAP) to sn-glycerol 3-phosphate (G3P), the key precursor for phospholipid synthesis. This is Glycerol-3-phosphate dehydrogenase [NAD(P)+] from Pseudomonas putida (strain ATCC 700007 / DSM 6899 / JCM 31910 / BCRC 17059 / LMG 24140 / F1).